A 515-amino-acid chain; its full sequence is Alpha-1B adrenergic receptor (515 aa).

The Extracellular segment spans residues 1 to 45 (MNPDLDTGHNTSAPAQWGELKDANFTGPNQTSSNSTLPQLDVTRA). 3 N-linked (GlcNAc...) asparagine glycosylation sites follow: Asn10, Asn24, and Asn34. Residues 46-70 (ISVGLVLGAFILFAIVGNILVILSV) traverse the membrane as a helical segment. Residues 71–83 (ACNRHLRTPTNYF) are Cytoplasmic-facing. The helical transmembrane segment at 84 to 105 (IVNLAIADLLLSFTVLPFSATL) threads the bilayer. The Extracellular portion of the chain corresponds to 106 to 115 (EVLGYWVLGR). A helical transmembrane segment spans residues 116-141 (IFCDIWAAVDVLCCTASILSLCAISI). Residues Cys118 and Cys195 are joined by a disulfide bond. Topologically, residues 142 to 161 (DRYIGVRYSLQYPTLVTRRK) are cytoplasmic. A helical membrane pass occupies residues 162 to 184 (AILALLSVWVLSTVISIGPLLGW). Residues 185 to 201 (KEPAPNDDKECGVTEEP) are Extracellular-facing. A helical membrane pass occupies residues 202-224 (FYALFSSLGSFYIPLAVILVMYC). Residues 225 to 295 (RVYIVAKRTT…FSREKKAAKT (71 aa)) are Cytoplasmic-facing. Thr264 carries the phosphothreonine modification. A helical membrane pass occupies residues 296–319 (LGIVVGMFILCWLPFFIALPLGSL). The Extracellular portion of the chain corresponds to 320–326 (FSTLKPP). The helical transmembrane segment at 327 to 351 (DAVFKVVFWLGYFNSCLNPIIYPCS) threads the bilayer. Residues 352-515 (SKEFKRAFMR…SNMPLAPGHF (164 aa)) are Cytoplasmic-facing. Cys365 carries S-palmitoyl cysteine lipidation. The short motif at 368 to 378 (RSGRRRRRRRR) is the Nuclear localization signal element. Disordered regions lie at residues 392 to 428 (GGSL…SPGY) and 473 to 515 (LLGE…PGHF). Polar residues predominate over residues 410–424 (SCMSGSQRTLPSASP).

This sequence belongs to the G-protein coupled receptor 1 family. Adrenergic receptor subfamily. ADRA1B sub-subfamily. In terms of assembly, homo- and heterooligomer. Heterooligomerizes with ADRA1B homooligomers in cardiac myocytes. Interacts with CAVIN4.

The protein localises to the nucleus membrane. It is found in the cell membrane. The protein resides in the cytoplasm. It localises to the membrane. Its subcellular location is the caveola. Its function is as follows. This alpha-adrenergic receptor mediates its action by association with G proteins that activate a phosphatidylinositol-calcium second messenger system. Its effect is mediated by G(q) and G(11) proteins. Nuclear ADRA1A-ADRA1B heterooligomers regulate phenylephrine (PE)-stimulated ERK signaling in cardiac myocytes. The polypeptide is Alpha-1B adrenergic receptor (ADRA1B) (Mesocricetus auratus (Golden hamster)).